We begin with the raw amino-acid sequence, 374 residues long: Hydroxylysine kinase (374 aa).

The active-site Proton acceptor is the Asp-228.

Belongs to the aminoglycoside phosphotransferase family.

Its subcellular location is the cytoplasm. The enzyme catalyses (5R)-5-hydroxy-L-lysine + GTP = (5R)-5-phosphooxy-L-lysine + GDP + H(+). In terms of biological role, catalyzes the GTP-dependent phosphorylation of 5-hydroxy-L-lysine. The protein is Hydroxylysine kinase (hykk) of Xenopus laevis (African clawed frog).